A 124-amino-acid polypeptide reads, in one-letter code: Aspartate 1-decarboxylase (124 aa).

Ser-21 functions as the Schiff-base intermediate with substrate; via pyruvic acid in the catalytic mechanism. Position 21 is a pyruvic acid (Ser) (Ser-21). Thr-53 serves as a coordination point for substrate. Tyr-54 serves as the catalytic Proton donor. A substrate-binding site is contributed by Gly-69–Ala-71.

This sequence belongs to the PanD family. As to quaternary structure, heterooctamer of four alpha and four beta subunits. Requires pyruvate as cofactor. In terms of processing, is synthesized initially as an inactive proenzyme, which is activated by self-cleavage at a specific serine bond to produce a beta-subunit with a hydroxyl group at its C-terminus and an alpha-subunit with a pyruvoyl group at its N-terminus.

The protein localises to the cytoplasm. The catalysed reaction is L-aspartate + H(+) = beta-alanine + CO2. Its pathway is cofactor biosynthesis; (R)-pantothenate biosynthesis; beta-alanine from L-aspartate: step 1/1. In terms of biological role, catalyzes the pyruvoyl-dependent decarboxylation of aspartate to produce beta-alanine. In Dehalococcoides mccartyi (strain ATCC BAA-2266 / KCTC 15142 / 195) (Dehalococcoides ethenogenes (strain 195)), this protein is Aspartate 1-decarboxylase.